A 262-amino-acid polypeptide reads, in one-letter code: Sperm microtubule inner protein 6 (262 aa).

It belongs to the SPMIP6 family. In terms of assembly, microtubule inner protein component of sperm flagellar doublet microtubules. Interacts with alpha-tubulin. Expressed in testis. Strongly expressed in ciliated epithelial cells with lower levels in goblet cells (at protein level).

It localises to the cytoplasm. The protein localises to the cytoskeleton. It is found in the nucleus. The protein resides in the mitochondrion. Its subcellular location is the flagellum axoneme. Its function is as follows. May participate in intramanchette transport and midpiece formation of the sperm tail. May play a potential role in somatic cell proliferation. The sequence is that of Sperm microtubule inner protein 6 from Homo sapiens (Human).